Reading from the N-terminus, the 158-residue chain is 2-C-methyl-D-erythritol 2,4-cyclodiphosphate synthase (158 aa).

2 residues coordinate a divalent metal cation: Asp10 and His12. 4-CDP-2-C-methyl-D-erythritol 2-phosphate is bound by residues 10–12 (DVH) and 36–37 (HS). Position 44 (His44) interacts with a divalent metal cation. Residues 58 to 60 (DIG), 63 to 67 (FSDTD), and Arg144 each bind 4-CDP-2-C-methyl-D-erythritol 2-phosphate.

Belongs to the IspF family. Homotrimer. A divalent metal cation is required as a cofactor.

It catalyses the reaction 4-CDP-2-C-methyl-D-erythritol 2-phosphate = 2-C-methyl-D-erythritol 2,4-cyclic diphosphate + CMP. Its pathway is isoprenoid biosynthesis; isopentenyl diphosphate biosynthesis via DXP pathway; isopentenyl diphosphate from 1-deoxy-D-xylulose 5-phosphate: step 4/6. Functionally, involved in the biosynthesis of isopentenyl diphosphate (IPP) and dimethylallyl diphosphate (DMAPP), two major building blocks of isoprenoid compounds. Catalyzes the conversion of 4-diphosphocytidyl-2-C-methyl-D-erythritol 2-phosphate (CDP-ME2P) to 2-C-methyl-D-erythritol 2,4-cyclodiphosphate (ME-CPP) with a corresponding release of cytidine 5-monophosphate (CMP). This Burkholderia vietnamiensis (strain G4 / LMG 22486) (Burkholderia cepacia (strain R1808)) protein is 2-C-methyl-D-erythritol 2,4-cyclodiphosphate synthase.